Here is a 234-residue protein sequence, read N- to C-terminus: Leucyl/phenylalanyl-tRNA--protein transferase (234 aa).

The protein belongs to the L/F-transferase family.

It is found in the cytoplasm. The catalysed reaction is N-terminal L-lysyl-[protein] + L-leucyl-tRNA(Leu) = N-terminal L-leucyl-L-lysyl-[protein] + tRNA(Leu) + H(+). The enzyme catalyses N-terminal L-arginyl-[protein] + L-leucyl-tRNA(Leu) = N-terminal L-leucyl-L-arginyl-[protein] + tRNA(Leu) + H(+). It catalyses the reaction L-phenylalanyl-tRNA(Phe) + an N-terminal L-alpha-aminoacyl-[protein] = an N-terminal L-phenylalanyl-L-alpha-aminoacyl-[protein] + tRNA(Phe). Functions in the N-end rule pathway of protein degradation where it conjugates Leu, Phe and, less efficiently, Met from aminoacyl-tRNAs to the N-termini of proteins containing an N-terminal arginine or lysine. This chain is Leucyl/phenylalanyl-tRNA--protein transferase, found in Escherichia coli O157:H7 (strain EC4115 / EHEC).